The chain runs to 123 residues: Large ribosomal subunit protein bL12 (123 aa).

It belongs to the bacterial ribosomal protein bL12 family. Homodimer. Part of the ribosomal stalk of the 50S ribosomal subunit. Forms a multimeric L10(L12)X complex, where L10 forms an elongated spine to which 2 to 4 L12 dimers bind in a sequential fashion. Binds GTP-bound translation factors.

Its function is as follows. Forms part of the ribosomal stalk which helps the ribosome interact with GTP-bound translation factors. Is thus essential for accurate translation. This Salmonella arizonae (strain ATCC BAA-731 / CDC346-86 / RSK2980) protein is Large ribosomal subunit protein bL12.